The chain runs to 323 residues: Aquaporin-4 (323 aa).

Residues 1-36 lie on the Cytoplasmic side of the membrane; sequence MSDRPTARRWGKCGPLCTRENIMVAFKGVWTQAFWK. 2 S-palmitoyl cysteine lipidation sites follow: cysteine 13 and cysteine 17. A helical transmembrane segment spans residues 37–57; the sequence is AVTAEFLAMLIFVLLSLGSTI. The Extracellular portion of the chain corresponds to 58-69; sequence NWGGTEKPLPVD. The chain crosses the membrane as a helical span at residues 70–89; it reads MVLISLCFGLSIATMVQCFG. The Cytoplasmic portion of the chain corresponds to 90-93; it reads HISG. The discontinuously helical intramembrane region spans 94 to 101; the sequence is GHINPAVT. The NPA 1 motif lies at 97–99; sequence NPA. The Cytoplasmic portion of the chain corresponds to 102–115; sequence VAMVCTRKISIAKS. Serine 111 carries the post-translational modification Phosphoserine; by PKG. The chain crosses the membrane as a helical span at residues 116 to 136; sequence VFYIAAQCLGAIIGAGILYLV. The Extracellular segment spans residues 137 to 155; it reads TPPSVVGGLGVTMVHGNLT. N-linked (GlcNAc...) asparagine glycosylation is present at asparagine 153. The helical transmembrane segment at 156–176 threads the bilayer; the sequence is AGHGLLVELIITFQLVFTIFA. The Cytoplasmic portion of the chain corresponds to 177-184; the sequence is SCDSKRTD. Serine 180 is modified (phosphoserine; by PKC). Residues 185–205 traverse the membrane as a helical segment; sequence VTGSIALAIGFSVAIGHLFAI. The N-linked (GlcNAc...) asparagine glycan is linked to asparagine 206. The Extracellular portion of the chain corresponds to 206 to 208; it reads NYT. Residues 209–222 constitute an intramembrane region (discontinuously helical); that stretch reads GASMNPARSFGPAV. Positions 213–215 match the NPA 2 motif; the sequence is NPA. Residues 223–231 are Extracellular-facing; the sequence is IMGNWENHW. The chain crosses the membrane as a helical span at residues 232-252; that stretch reads IYWVGPIIGAVLAGGLYEYVF. The Cytoplasmic segment spans residues 253–323; sequence CPDVEFKRRF…DQSGEVLSSV (71 aa). Phosphoserine is present on residues serine 276 and serine 285. Threonine 289 is modified (phosphothreonine). Residue serine 321 is modified to Phosphoserine.

This sequence belongs to the MIP/aquaporin (TC 1.A.8) family. Homotetramer. The tetramers can form oligomeric arrays in membranes. The size of the oligomers differs between tissues and is smaller in skeletal muscle than in brain. Interaction between AQP4 oligomeric arrays in close-by cells can contribute to cell-cell adhesion. Part of a complex containing MLC1, TRPV4, HEPACAM and ATP1B1. In terms of processing, phosphorylation by PKC at Ser-180 reduces conductance by 50%. Phosphorylation by PKG at Ser-111 in response to glutamate increases conductance by 40%. Post-translationally, isoform 2: Palmitoylated on its N-terminal region. Isoform 1: Not palmitoylated. In terms of tissue distribution, detected in skeletal muscle. Detected in stomach, along the glandular base region of the fundic gland (at protein level). Detected in brain, lung and skeletal muscle, and at much lower levels in heart and ovary.

Its subcellular location is the cell membrane. It is found in the basolateral cell membrane. It localises to the endosome membrane. The protein localises to the sarcolemma. The protein resides in the cell projection. It catalyses the reaction H2O(in) = H2O(out). Its function is as follows. Forms a water-specific channel. Plays an important role in brain water homeostasis. It is involved in glymphatic solute transport and is required for a normal rate of water exchange across the blood brain interface. Required for normal levels of cerebrospinal fluid influx into the brain cortex and parenchyma along paravascular spaces that surround penetrating arteries, and for normal drainage of interstitial fluid along paravenous drainage pathways. Thereby, it is required for normal clearance of solutes from the brain interstitial fluid, including soluble beta-amyloid peptides derived from APP. Plays a redundant role in urinary water homeostasis and urinary concentrating ability. The protein is Aquaporin-4 (AQP4) of Homo sapiens (Human).